A 775-amino-acid polypeptide reads, in one-letter code: MASLIYRQLLTNSYSVDLHDEIEQIGSEKTQNVTINPGPFAQTRYAPVNWRHGEINDSTTVEPVLDGPYQPTTFKPPNDYWLLISSNTDGVVYESTNNSDFWTAVIAVEPRVSQTNRQYILFGENKQFNIENNSDKWKFFEMFKGSSQSNFSNRRTLTSNNRLVGMLKYGGRVWTFHGETPRATTDSSNTADLNNISIVIHSEFYIIPRSQESKCNEYINNGLPPIQNTRNVVPLSLSSRSIQYRRAQVNEDITISKTSLWKEMQYNRDIIIRFKFGNSVIKLGGLGYKWSEISYKAANYQYSYSRDGEQVTAHTTCSVNGVNNFSYNGGSLPTDFSISRYEVIKENSYVYIDYWDDSKAFRNMVYVRSLAANLNSVKCAGGSYNFRLPVGEWPIMNGGAVSLHFAGVTLSTQFTNFVSLNSLRFRFSLTVDEPSFSIIRTRTVNLYGLPAANPNNGNEYYEMSGRFSLISLVPTNDDYQTPIMNSVTVRQDLERQLSDLREEFNSLSQEIAMSQLIDLALLPLDMFSMFSGIKSTIDLTKSMATSVMKKFRKSKLATSISEMTNSLSDAASSASRSASVRSNLSVISNWTDASKSTSNITDLVNDVSTQTSTISKKLRLKEMITQTEGMSFDDISAAVLKTKIDMSTQIGKNTLPDIVTEASEKFIPKRSYRVLKDNEVMEINTEGKFFAYKVDTLNEIPFDINKFAELVTDSPVISAIIDFKTLKNLNDNYGITRMEALNLIKSNPNVLRNFINQNNPIIRNRIEQLILQCKL.

The interval 65–223 is spike head; it reads LDGPYQPTTF…KCNEYINNGL (159 aa). A spike body and stalk (antigen domain) region spans residues 247 to 478; that stretch reads AQVNEDITIS…LISLVPTNDD (232 aa). The short motif at 307–309 is the DGE motif; interaction with ITGA2/ITGB1 heterodimer element; that stretch reads DGE. An intrachain disulfide couples Cys-317 to Cys-379. Positions 388–408 are hydrophobic; possible role in virus entry into host cell; sequence LPVGEWPIMNGGAVSLHFAGV. Positions 447 to 449 match the YGL motif; interaction with ITGA4 motif; that stretch reads YGL. Positions 483-510 form a coiled coil; sequence IMNSVTVRQDLERQLSDLREEFNSLSQE. Residues 509–775 are spike foot; that stretch reads QEIAMSQLID…IEQLILQCKL (267 aa). The KID motif; interaction with HSPA8 signature appears at 643–645; sequence KID.

Belongs to the rotavirus VP4 family. In terms of assembly, homotrimer. VP4 adopts a dimeric appearance above the capsid surface, while forming a trimeric base anchored inside the capsid layer. Only hints of the third molecule are observed above the capsid surface. It probably performs a series of molecular rearrangements during viral entry. Prior to trypsin cleavage, it is flexible. The priming trypsin cleavage triggers its rearrangement into rigid spikes with approximate two-fold symmetry of their protruding parts. After an unknown second triggering event, cleaved VP4 may undergo another rearrangement, in which two VP5* subunits fold back on themselves and join a third subunit to form a tightly associated trimer, shaped like a folded umbrella. Interacts with VP6. Interacts with VP7. Homotrimer. The trimer is coiled-coil stabilized by its C-terminus, however, its N-terminus, known as antigen domain or 'body', seems to be flexible allowing it to self-associate either as a dimer or a trimer. In terms of processing, proteolytic cleavage by trypsin results in activation of VP4 functions and greatly increases infectivity. The penetration into the host cell is dependent on trypsin treatment of VP4. It produces two peptides, VP5* and VP8* that remain associated with the virion. Cleavage of VP4 by trypsin probably occurs in vivo in the lumen of the intestine prior to infection of enterocytes. Trypsin seems to be incorporated into the three-layered viral particles but remains inactive as long as the viral outer capsid is intact and would only be activated upon the solubilization of the latter.

Its subcellular location is the virion. The protein localises to the host rough endoplasmic reticulum. It is found in the host cell membrane. It localises to the host cytoplasm. The protein resides in the host cytoskeleton. Its subcellular location is the host endoplasmic reticulum-Golgi intermediate compartment. Its function is as follows. Spike-forming protein that mediates virion attachment to the host epithelial cell receptors and plays a major role in cell penetration, determination of host range restriction and virulence. Rotavirus attachment and entry into the host cell probably involves multiple sequential contacts between the outer capsid proteins VP4 and VP7, and the cell receptors. It is subsequently lost, together with VP7, following virus entry into the host cell. Following entry into the host cell, low intracellular or intravesicular Ca(2+) concentration probably causes the calcium-stabilized VP7 trimers to dissociate from the virion. This step is probably necessary for the membrane-disrupting entry step and the release of VP4, which is locked onto the virion by VP7. During the virus exit from the host cell, VP4 seems to be required to target the newly formed virions to the host cell lipid rafts. In terms of biological role, forms the spike 'foot' and 'body' and acts as a membrane permeabilization protein that mediates release of viral particles from endosomal compartments into the cytoplasm. During entry, the part of VP5* that protrudes from the virus folds back on itself and reorganizes from a local dimer to a trimer. This reorganization may be linked to membrane penetration by exposing VP5* hydrophobic region. In integrin-dependent strains, VP5* targets the integrin heterodimer ITGA2/ITGB1 for cell attachment. Functionally, forms the head of the spikes and mediates the recognition of specific host cell surface glycans. It is the viral hemagglutinin and an important target of neutralizing antibodies. In sialic acid-dependent strains, VP8* binds to host cell sialic acid, most probably a ganglioside, providing the initial contact. In some other strains, VP8* mediates the attachment to histo-blood group antigens (HBGAs) for viral entry. The chain is Outer capsid protein VP4 from Homo sapiens (Human).